The primary structure comprises 101 residues: NADH-quinone oxidoreductase subunit K (101 aa).

3 consecutive transmembrane segments (helical) span residues L4–I24, L30–F50, and V61–V81.

The protein belongs to the complex I subunit 4L family. NDH-1 is composed of 14 different subunits. Subunits NuoA, H, J, K, L, M, N constitute the membrane sector of the complex.

It is found in the cell inner membrane. The catalysed reaction is a quinone + NADH + 5 H(+)(in) = a quinol + NAD(+) + 4 H(+)(out). In terms of biological role, NDH-1 shuttles electrons from NADH, via FMN and iron-sulfur (Fe-S) centers, to quinones in the respiratory chain. The immediate electron acceptor for the enzyme in this species is believed to be ubiquinone. Couples the redox reaction to proton translocation (for every two electrons transferred, four hydrogen ions are translocated across the cytoplasmic membrane), and thus conserves the redox energy in a proton gradient. This is NADH-quinone oxidoreductase subunit K from Alkalilimnicola ehrlichii (strain ATCC BAA-1101 / DSM 17681 / MLHE-1).